A 158-amino-acid chain; its full sequence is Large ribosomal subunit protein eL20z (158 aa).

This sequence belongs to the eukaryotic ribosomal protein eL20 family.

The protein is Large ribosomal subunit protein eL20z (RPL18A1) of Arabidopsis thaliana (Mouse-ear cress).